The primary structure comprises 160 residues: Transcription elongation factor GreA (160 aa).

Positions 8-28 (LTEEGLKQLEAELEHLIQVKR) form a coiled coil.

This sequence belongs to the GreA/GreB family.

Necessary for efficient RNA polymerase transcription elongation past template-encoded arresting sites. The arresting sites in DNA have the property of trapping a certain fraction of elongating RNA polymerases that pass through, resulting in locked ternary complexes. Cleavage of the nascent transcript by cleavage factors such as GreA or GreB allows the resumption of elongation from the new 3'terminus. GreA releases sequences of 2 to 3 nucleotides. This Mycoplasma pneumoniae (strain ATCC 29342 / M129 / Subtype 1) (Mycoplasmoides pneumoniae) protein is Transcription elongation factor GreA.